Reading from the N-terminus, the 192-residue chain is MTVQLALVPILLLGTAAVMVHCMPFSSSQRNDTLERRWETLFSRSMARIPGEKKDMSRESDYLLGIKRLRRLYCNVGIGFHIQVLPDGRINGMHNENRYSLLEISPVEVGVVSLYGIKSAMFVAMNAKGKLYGSRYFNEECKFKETLLPNNYNAYESRKYPGMYIALGKNGRTKKGNRVSPTMTLTHFLPRI.

Positions 1–22 (MTVQLALVPILLLGTAAVMVHC) are cleaved as a signal peptide.

It belongs to the heparin-binding growth factors family.

It is found in the secreted. Functionally, plays an important role in the regulation of embryonic development, cell proliferation, and cell differentiation. Good candidate for an inducing factor with possible roles both in mesoderm induction at the blastula stage and in the formation of the anteroposterior axis at the gastrula stage. This is Fibroblast growth factor 4B (fgf4-b) from Xenopus laevis (African clawed frog).